The sequence spans 244 residues: MGRGPSIEARKNASDSKRGKIFTKIIRQIGVAARAGGGDPSNNPSLRVVIDKALASNMSKDVIERAIKKAIGEMEGVQYEEVRYEGYAPGGVAVIVDCLTDNRLRTVSDVRHAFSKCGGNMGTEGSVAFMFKRLGVLSYAHAIADEERITEAAIDAGAEDVMVYTEDDEIEVITTPEAFSRVKEEMAALGLMPYHAQITFRADSDIVVDGDTAIQVRKLLDILEDLDDVQDVYSNVDQVTLGKR.

Belongs to the TACO1 family.

It localises to the cytoplasm. This is Probable transcriptional regulatory protein XF_1906 from Xylella fastidiosa (strain 9a5c).